A 131-amino-acid polypeptide reads, in one-letter code: Large ribosomal subunit protein bL17 (131 aa).

It belongs to the bacterial ribosomal protein bL17 family. Part of the 50S ribosomal subunit. Contacts protein L32.

The polypeptide is Large ribosomal subunit protein bL17 (Cupriavidus metallidurans (strain ATCC 43123 / DSM 2839 / NBRC 102507 / CH34) (Ralstonia metallidurans)).